The chain runs to 326 residues: N-acetyl-gamma-glutamyl-phosphate reductase (326 aa).

Cysteine 155 is a catalytic residue.

The protein belongs to the NAGSA dehydrogenase family. Type 1 subfamily.

The protein resides in the cytoplasm. It catalyses the reaction N-acetyl-L-glutamate 5-semialdehyde + phosphate + NADP(+) = N-acetyl-L-glutamyl 5-phosphate + NADPH + H(+). It functions in the pathway amino-acid biosynthesis; L-arginine biosynthesis; N(2)-acetyl-L-ornithine from L-glutamate: step 3/4. Functionally, catalyzes the NADPH-dependent reduction of N-acetyl-5-glutamyl phosphate to yield N-acetyl-L-glutamate 5-semialdehyde. This chain is N-acetyl-gamma-glutamyl-phosphate reductase, found in Shewanella baltica (strain OS195).